A 2788-amino-acid polypeptide reads, in one-letter code: Multiple epidermal growth factor-like domains protein 8 (2788 aa).

A signal peptide spans 1-27 (MALGGALAAALALAFAVLGPLSHKVLA). Residues 28-2590 (GDCKGQRQVL…FFRQDQAHID (2563 aa)) lie on the Extracellular side of the membrane. 6 cysteine pairs are disulfide-bonded: cysteine 30/cysteine 57, cysteine 142/cysteine 152, cysteine 146/cysteine 158, cysteine 174/cysteine 184, cysteine 178/cysteine 191, and cysteine 193/cysteine 202. One can recognise a CUB 1 domain in the interval 30–140 (CKGQRQVLRE…LGFNASFRFS (111 aa)). N-linked (GlcNAc...) asparagine glycosylation is present at asparagine 50. 2 consecutive EGF-like domains span residues 138 to 168 (RFSLCPGGCQNHGQCKSPGVCVCEPGWGGPD) and 170 to 203 (GLQECSAYCGSHGTCASTLGPCRCEPGFLGRACD). 6 Kelch repeats span residues 241 to 287 (LLAV…AVAW), 290 to 338 (FLVL…AGHA), 346 to 399 (WLYV…FHAP), 402 to 453 (TLLV…FHTA), 459 to 511 (YMVV…APPS), and 525 to 575 (VLLV…SRDP). PSI domains are found at residues 561-613 (YCSM…SDCQ), 847-899 (ACSS…ALCP), and 900-947 (LCEE…EECP). An N-linked (GlcNAc...) asparagine glycan is attached at asparagine 1048. In terms of domain architecture, EGF-like 3; calcium-binding spans 1074 to 1115 (DVDECRLGLARCHPRATCLNTPLSYECHCQRGYQGDGITHCN). Cystine bridges form between cysteine 1078/cysteine 1091, cysteine 1085/cysteine 1100, cysteine 1102/cysteine 1114, cysteine 1163/cysteine 1171, cysteine 1165/cysteine 1179, cysteine 1182/cysteine 1191, cysteine 1194/cysteine 1208, cysteine 1211/cysteine 1224, cysteine 1213/cysteine 1231, cysteine 1233/cysteine 1242, cysteine 1245/cysteine 1259, cysteine 1263/cysteine 1302, cysteine 1336/cysteine 1367, cysteine 1407/cysteine 1421, cysteine 1415/cysteine 1433, and cysteine 1435/cysteine 1444. Laminin EGF-like domains are found at residues 1163–1210 (CGCN…GCRP) and 1211–1261 (CQCN…SCFR). The 143-residue stretch at 1263–1405 (CGGRALLTNV…WGFNASVGSA (143 aa)) folds into the CUB 2 domain. The N-linked (GlcNAc...) asparagine glycan is linked to asparagine 1271. Threonine 1353 is subject to Phosphothreonine. An EGF-like 4 domain is found at 1403–1445 (GSARCGSGGPGSCPVPQECVPQDGAAGAGLCRCPQGWAGPHCR). Kelch repeat units lie at residues 1522 to 1570 (TLWM…SFHA), 1580 to 1626 (AMYL…HTLT), 1632 to 1678 (SLLL…SAVY), 1684 to 1734 (SLYV…HASA), 1739 to 1786 (TMVV…ESVA), and 1795 to 1840 (RLYI…WCHG). PSI domains are found at residues 1819–1859 (PCRL…PPCS), 1867–1922 (ECRR…NDCR), 2003–2061 (PCHL…ESCS), and 2063–2120 (GCAQ…LSCP). Residue asparagine 2009 is glycosylated (N-linked (GlcNAc...) asparagine). Residues 2121-2159 (PEDECANGHHDCNETQNCHDQPHGYECSCKTGYTMDNVT) enclose the EGF-like 5 domain. Intrachain disulfides connect cysteine 2125-cysteine 2138 and cysteine 2132-cysteine 2147. 2 N-linked (GlcNAc...) asparagine glycosylation sites follow: asparagine 2157 and asparagine 2172. 4 disulfide bridges follow: cysteine 2196–cysteine 2204, cysteine 2198–cysteine 2213, cysteine 2216–cysteine 2225, and cysteine 2228–cysteine 2242. 2 consecutive Laminin EGF-like domains span residues 2196 to 2244 (CRCN…TCRP) and 2323 to 2386 (CQCN…QCYR). The tract at residues 2465–2507 (HTVHIQPPPPPPPPPPPADGVPRVASDLGGLGTGSGSGSPVEP) is disordered. A compositionally biased stretch (pro residues) spans 2470-2483 (QPPPPPPPPPPPAD). The chain crosses the membrane as a helical span at residues 2591-2611 (LFVFFSVFFSCFFLFLSLCVL). At 2612 to 2788 (LWKAKQALDQ…SQDNLTSMSL (177 aa)) the chain is on the cytoplasmic side. Gly residues predominate over residues 2761–2775 (GGAGGSGHGGGGGRK). The segment at 2761-2788 (GGAGGSGHGGGGGRKGLLSQDNLTSMSL) is disordered. The segment covering 2779–2788 (SQDNLTSMSL) has biased composition (polar residues).

In terms of tissue distribution, expressed in brain.

The protein localises to the membrane. Its function is as follows. Acts as a negative regulator of hedgehog signaling. In Rattus norvegicus (Rat), this protein is Multiple epidermal growth factor-like domains protein 8 (Megf8).